Reading from the N-terminus, the 581-residue chain is Chaperonin GroEL 1 (581 aa).

ATP contacts are provided by residues 29-32 (TIGP), 86-90 (DGTTT), Gly-413, and Asp-492. Residues 522 to 541 (PEPEAAGPGGPGADPMGGMG) are disordered. A compositionally biased stretch (gly residues) spans 528–541 (GPGGPGADPMGGMG).

Belongs to the chaperonin (HSP60) family. Forms a cylinder of 14 subunits composed of two heptameric rings stacked back-to-back. Interacts with the co-chaperonin GroES.

Its subcellular location is the cytoplasm. It catalyses the reaction ATP + H2O + a folded polypeptide = ADP + phosphate + an unfolded polypeptide.. In terms of biological role, together with its co-chaperonin GroES, plays an essential role in assisting protein folding. The GroEL-GroES system forms a nano-cage that allows encapsulation of the non-native substrate proteins and provides a physical environment optimized to promote and accelerate protein folding. The protein is Chaperonin GroEL 1 of Prochlorococcus marinus (strain MIT 9301).